Consider the following 376-residue polypeptide: Queuine tRNA-ribosyltransferase (376 aa).

D93 functions as the Proton acceptor in the catalytic mechanism. Substrate is bound by residues 93 to 97 (DSGGF), D147, Q190, and G217. The segment at 248–254 (GVGTPDD) is RNA binding. D267 functions as the Nucleophile in the catalytic mechanism. The RNA binding; important for wobble base 34 recognition stretch occupies residues 272 to 276 (TRSGR).

The protein belongs to the queuine tRNA-ribosyltransferase family. Homodimer. Within each dimer, one monomer is responsible for RNA recognition and catalysis, while the other monomer binds to the replacement base PreQ1.

It catalyses the reaction 7-aminomethyl-7-carbaguanine + guanosine(34) in tRNA = 7-aminomethyl-7-carbaguanosine(34) in tRNA + guanine. Its pathway is tRNA modification; tRNA-queuosine biosynthesis. Its function is as follows. Catalyzes the base-exchange of a guanine (G) residue with the queuine precursor 7-aminomethyl-7-deazaguanine (PreQ1) at position 34 (anticodon wobble position) in tRNAs with GU(N) anticodons (tRNA-Asp, -Asn, -His and -Tyr). Catalysis occurs through a double-displacement mechanism. The nucleophile active site attacks the C1' of nucleotide 34 to detach the guanine base from the RNA, forming a covalent enzyme-RNA intermediate. The proton acceptor active site deprotonates the incoming PreQ1, allowing a nucleophilic attack on the C1' of the ribose to form the product. After dissociation, two additional enzymatic reactions on the tRNA convert PreQ1 to queuine (Q), resulting in the hypermodified nucleoside queuosine (7-(((4,5-cis-dihydroxy-2-cyclopenten-1-yl)amino)methyl)-7-deazaguanosine). The polypeptide is Queuine tRNA-ribosyltransferase (Agrobacterium fabrum (strain C58 / ATCC 33970) (Agrobacterium tumefaciens (strain C58))).